The following is a 1498-amino-acid chain: DNA-directed RNA polymerase subunit beta' (1498 aa).

Residues cysteine 67, cysteine 69, cysteine 82, and cysteine 85 each coordinate Zn(2+). Positions 499, 501, and 503 each coordinate Mg(2+). The Zn(2+) site is built by cysteine 867, cysteine 943, cysteine 950, and cysteine 953.

Belongs to the RNA polymerase beta' chain family. In terms of assembly, the RNAP catalytic core consists of 2 alpha, 1 beta, 1 beta' and 1 omega subunit. When a sigma factor is associated with the core the holoenzyme is formed, which can initiate transcription. Mg(2+) is required as a cofactor. Requires Zn(2+) as cofactor.

It carries out the reaction RNA(n) + a ribonucleoside 5'-triphosphate = RNA(n+1) + diphosphate. Functionally, DNA-dependent RNA polymerase catalyzes the transcription of DNA into RNA using the four ribonucleoside triphosphates as substrates. The polypeptide is DNA-directed RNA polymerase subunit beta' (Chlorobium luteolum (strain DSM 273 / BCRC 81028 / 2530) (Pelodictyon luteolum)).